The following is a 295-amino-acid chain: Forkhead box protein N5 (295 aa).

The segment at 119-146 is disordered; sequence STVEDSEDEAPTSCSDLMTDDDNDDSYN. The fork-head DNA-binding region spans 178-275; it reads RPPLNYCNLI…NEMHALSDDL (98 aa).

In terms of tissue distribution, ubiquitously expressed in early cleavage stage and gastrula stage embryos.

It localises to the nucleus. This chain is Forkhead box protein N5, found in Xenopus laevis (African clawed frog).